A 276-amino-acid polypeptide reads, in one-letter code: Large ribosomal subunit protein uL2 (276 aa).

Disordered regions lie at residues 38-59 and 225-276; these read FQKSGRNNNGHITTRHKGGGHK and VMNP…RHKR. The span at 39–49 shows a compositional bias: polar residues; the sequence is QKSGRNNNGHI. Residues 50-59 are compositionally biased toward basic residues; that stretch reads TTRHKGGGHK.

The protein belongs to the universal ribosomal protein uL2 family. As to quaternary structure, part of the 50S ribosomal subunit. Forms a bridge to the 30S subunit in the 70S ribosome.

Its function is as follows. One of the primary rRNA binding proteins. Required for association of the 30S and 50S subunits to form the 70S ribosome, for tRNA binding and peptide bond formation. It has been suggested to have peptidyltransferase activity; this is somewhat controversial. Makes several contacts with the 16S rRNA in the 70S ribosome. The sequence is that of Large ribosomal subunit protein uL2 from Cupriavidus necator (strain ATCC 17699 / DSM 428 / KCTC 22496 / NCIMB 10442 / H16 / Stanier 337) (Ralstonia eutropha).